The sequence spans 81 residues: Cytochrome c oxidase subunit 7A1, mitochondrial (81 aa).

The N-terminal 21 residues, 1-21 (MRHLLGLPQLASRAFSTTVRQ), are a transit peptide targeting the mitochondrion. Residues 51 to 72 (ILYRLTMTLTVVGTGYSLYWLL) form a helical membrane-spanning segment.

Belongs to the cytochrome c oxidase VIIa family. Component of the complex IV (CIV, cytochrome c oxidase). The complex exists as a monomer or a dimer and forms supercomplexes (SCs) in the inner mitochondrial membrane with NADH-ubiquinone oxidoreductase (complex I, CI) and ubiquinol-cytochrome c oxidoreductase (cytochrome b-c1 complex, complex III, CIII), resulting in different assemblies (supercomplex SCI(1)III(2)IV(1) and megacomplex MCI(2)III(2)IV(2)).

Its subcellular location is the mitochondrion inner membrane. It functions in the pathway energy metabolism; oxidative phosphorylation. Component of the mitochondrial respiratory complex IV (CIV, also named cytochrome c oxidase complex), the last enzyme in the mitochondrial electron transport chain which drives oxidative phosphorylation. The CIV complex is the component of the respiratory chain that catalyzes the reduction of oxygen to water. Acts as an assembly factor that specifically drives the homodimerization of CIV complexes, mediating the formation of mitochondrial respiratory supercomplexes (respirasomes) containing two CIV: supercomplxes with two molecules of CIV show improved activity. The sequence is that of Cytochrome c oxidase subunit 7A1, mitochondrial from Danio rerio (Zebrafish).